A 584-amino-acid polypeptide reads, in one-letter code: Levansucrase (584 aa).

A signal peptide spans 1–30; the sequence is MAHVRRKVATLNMALAGSLLMVLGAQSALA. The residue at position 31 (Q31) is a Pyrrolidone carboxylic acid. The sucrose site is built by W134, D135, S225, R308, and D309. D135 (nucleophile) is an active-site residue. C339 and C395 are oxidised to a cystine. The active-site Proton donor/acceptor is E401.

The protein belongs to the glycosyl hydrolase 68 family. Monomer. In terms of processing, the N-terminus is blocked. The N-terminal Gln is cyclized to a pyroglutamic acid.

It is found in the secreted. The enzyme catalyses [6)-beta-D-fructofuranosyl-(2-&gt;](n) alpha-D-glucopyranoside + sucrose = [6)-beta-D-fructofuranosyl-(2-&gt;](n+1) alpha-D-glucopyranoside + D-glucose. Its activity is regulated as follows. Strongly inhibited by Hg(2+) and slightly activated by Co(2+). Not inhibited by the metal ion chelator EDTA, suggesting that this enzyme does not need a metal cofactor. In terms of biological role, catalyzes the synthesis of levan, a fructose polymer, by transferring the fructosyl moiety from sucrose to a growing acceptor molecule. Also displays sucrose hydrolase activity. In vitro, catalyzes transfructosylation from sucrose to a variety of acceptors including water (sucrose hydrolysis), glucose (exchange reaction), fructan (polymerase reaction) and sucrose (oligofructoside synthesis). Levansucrase of G.diazotrophicus SRT4, unlike the enzyme of B.subtilis, causes accumulation of large quantities of tri- and tetrasaccharides but small quantities of high-molecular-mass levan. It may act more as a sucrose hydrolase than as a fructan polymerase, and may be the key enzyme in the sucrose metabolism of G.diazotrophicus SRT4. The polypeptide is Levansucrase (Gluconacetobacter diazotrophicus (Acetobacter diazotrophicus)).